Consider the following 689-residue polypeptide: DNA ligase (689 aa).

NAD(+)-binding positions include 32-36, 81-82, and Glu-113; these read DAEYD and SL. The active-site N6-AMP-lysine intermediate is Lys-115. Arg-136, Glu-176, Lys-306, and Lys-330 together coordinate NAD(+). 4 residues coordinate Zn(2+): Cys-424, Cys-427, Cys-442, and Cys-448. The BRCT domain occupies 606–689; the sequence is AEELPLAEQI…ALLAEHGITI (84 aa).

Belongs to the NAD-dependent DNA ligase family. LigA subfamily. The cofactor is Mg(2+). Mn(2+) is required as a cofactor.

It carries out the reaction NAD(+) + (deoxyribonucleotide)n-3'-hydroxyl + 5'-phospho-(deoxyribonucleotide)m = (deoxyribonucleotide)n+m + AMP + beta-nicotinamide D-nucleotide.. Its function is as follows. DNA ligase that catalyzes the formation of phosphodiester linkages between 5'-phosphoryl and 3'-hydroxyl groups in double-stranded DNA using NAD as a coenzyme and as the energy source for the reaction. It is essential for DNA replication and repair of damaged DNA. This is DNA ligase from Colwellia psychrerythraea (strain 34H / ATCC BAA-681) (Vibrio psychroerythus).